The primary structure comprises 200 residues: Imidazoleglycerol-phosphate dehydratase (200 aa).

Belongs to the imidazoleglycerol-phosphate dehydratase family.

The protein localises to the cytoplasm. The catalysed reaction is D-erythro-1-(imidazol-4-yl)glycerol 3-phosphate = 3-(imidazol-4-yl)-2-oxopropyl phosphate + H2O. Its pathway is amino-acid biosynthesis; L-histidine biosynthesis; L-histidine from 5-phospho-alpha-D-ribose 1-diphosphate: step 6/9. This Renibacterium salmoninarum (strain ATCC 33209 / DSM 20767 / JCM 11484 / NBRC 15589 / NCIMB 2235) protein is Imidazoleglycerol-phosphate dehydratase.